A 356-amino-acid chain; its full sequence is S-adenosylmethionine:tRNA ribosyltransferase-isomerase (356 aa).

This sequence belongs to the QueA family. In terms of assembly, monomer.

The protein resides in the cytoplasm. It carries out the reaction 7-aminomethyl-7-carbaguanosine(34) in tRNA + S-adenosyl-L-methionine = epoxyqueuosine(34) in tRNA + adenine + L-methionine + 2 H(+). It functions in the pathway tRNA modification; tRNA-queuosine biosynthesis. Functionally, transfers and isomerizes the ribose moiety from AdoMet to the 7-aminomethyl group of 7-deazaguanine (preQ1-tRNA) to give epoxyqueuosine (oQ-tRNA). The sequence is that of S-adenosylmethionine:tRNA ribosyltransferase-isomerase from Xanthomonas euvesicatoria pv. vesicatoria (strain 85-10) (Xanthomonas campestris pv. vesicatoria).